We begin with the raw amino-acid sequence, 515 residues long: Vesicular acetylcholine transporter (515 aa).

Over 1–40 (MGVTMAVGLAKAAMGKISSAIGERSKRISGAMNEPRRKRK) the chain is Cytoplasmic. A helical transmembrane segment spans residues 41-61 (ILLVIVCIAMLLDNMLYMVIV). The Lumenal, vesicle segment spans residues 62-112 (PIIPNYLETIRTYKLVYITTPSNGTNGSLLNSTQRAVLERNPNANEDIQIG). N-linked (GlcNAc...) asparagine glycans are attached at residues Asn84, Asn87, and Asn92. Residues 113–133 (VLFASKAILQLLSNPFTGTFI) form a helical membrane-spanning segment. Residues 134–139 (DRVGYD) are Cytoplasmic-facing. Residues 140–160 (IPLLIGLTIMFFSTITFAFGE) traverse the membrane as a helical segment. Residues 161–169 (SYAVLFAAR) are Lumenal, vesicle-facing. Residues 170–190 (SLQGLGSAFADTSGIAMIADK) form a helical membrane-spanning segment. The Cytoplasmic segment spans residues 191–201 (YTEESERTQAL). A helical membrane pass occupies residues 202–222 (GIALAFISFGSLVAPPFGGVL). Topologically, residues 223–229 (YQFAGKW) are lumenal, vesicle. A helical membrane pass occupies residues 230–250 (VPFLVLSFVCLLDGILLLMVV). The Cytoplasmic segment spans residues 251–271 (TPFASRTRENMLQGTPIYKLM). The helical transmembrane segment at 272–292 (IDPYIAVVAGALTTCNIPLAF) threads the bilayer. The Lumenal, vesicle portion of the chain corresponds to 293–310 (LEPTISNWMKKTMNASEW). Asn306 carries an N-linked (GlcNAc...) asparagine glycan. The chain crosses the membrane as a helical span at residues 311-331 (QMGITWLPAFFPHILGVYITV). Residues 332-341 (KLAAKYPNYQ) are Cytoplasmic-facing. The chain crosses the membrane as a helical span at residues 342–362 (WFYGAVGLVIIGASSCTIPAC). Residues 363-367 (RNFEE) are Lumenal, vesicle-facing. Residues 368–388 (LIIPLCALCFGIALVDTALLP) form a helical membrane-spanning segment. The Cytoplasmic portion of the chain corresponds to 389 to 404 (TLAFLVDIRYVSVYGS). Residues 405 to 425 (VYAIADISYSVAYALGPIMAG) form a helical membrane-spanning segment. Over 426-432 (QIVHDLG) the chain is Lumenal, vesicle. The helical transmembrane segment at 433–453 (FVQLNLGMGLVNILYAPALLF) threads the bilayer. Topologically, residues 454–515 (LRNVCQMKPS…VLSDQEGYSE (62 aa)) are cytoplasmic. The tract at residues 489–515 (AAKEPHGSSSGNHSVHAVLSDQEGYSE) is disordered.

It belongs to the major facilitator superfamily. Vesicular transporter family. Electric lobe.

It is found in the membrane. Functionally, involved in acetylcholine transport into synaptic vesicles. This is Vesicular acetylcholine transporter from Tetronarce californica (Pacific electric ray).